Consider the following 96-residue polypeptide: Large ribosomal subunit protein bL27 (96 aa).

A propeptide spanning residues 1–11 (MLKTLENLQLF) is cleaved from the precursor. The segment at 13 to 36 (HKKGGGSTSNGRDSQAKRLGAKAA) is disordered.

It belongs to the bacterial ribosomal protein bL27 family. In terms of processing, the N-terminus is cleaved by ribosomal processing cysteine protease Prp.

In Streptococcus thermophilus (strain CNRZ 1066), this protein is Large ribosomal subunit protein bL27.